Reading from the N-terminus, the 209-residue chain is Ribonuclease HII (209 aa).

Residues 20–209 (GLVAGVDEAG…VARSLPGACR (190 aa)) enclose the RNase H type-2 domain. A divalent metal cation is bound by residues aspartate 26, glutamate 27, and aspartate 118.

Belongs to the RNase HII family. The cofactor is Mn(2+). Requires Mg(2+) as cofactor.

It localises to the cytoplasm. It carries out the reaction Endonucleolytic cleavage to 5'-phosphomonoester.. In terms of biological role, endonuclease that specifically degrades the RNA of RNA-DNA hybrids. This is Ribonuclease HII from Verminephrobacter eiseniae (strain EF01-2).